Reading from the N-terminus, the 78-residue chain is Large ribosomal subunit protein bL28 (78 aa).

The tract at residues 1-21 (MSRVCQVTGKRPMVGNNRSHA) is disordered.

It belongs to the bacterial ribosomal protein bL28 family.

The chain is Large ribosomal subunit protein bL28 from Shewanella halifaxensis (strain HAW-EB4).